The following is a 218-amino-acid chain: Ribose-5-phosphate isomerase A (218 aa).

Substrate is bound by residues Thr-28–Thr-31, Asp-81–Asp-84, and Lys-94–Gly-97. The Proton acceptor role is filled by Glu-103. Lys-121 is a binding site for substrate.

The protein belongs to the ribose 5-phosphate isomerase family. In terms of assembly, homodimer.

It carries out the reaction aldehydo-D-ribose 5-phosphate = D-ribulose 5-phosphate. It participates in carbohydrate degradation; pentose phosphate pathway; D-ribose 5-phosphate from D-ribulose 5-phosphate (non-oxidative stage): step 1/1. Catalyzes the reversible conversion of ribose-5-phosphate to ribulose 5-phosphate. The polypeptide is Ribose-5-phosphate isomerase A (Thioalkalivibrio sulfidiphilus (strain HL-EbGR7)).